Here is a 346-residue protein sequence, read N- to C-terminus: Arsenite methyltransferase (346 aa).

It belongs to the methyltransferase superfamily. Arsenite methyltransferase family.

It catalyses the reaction arsenic triglutathione + [thioredoxin]-dithiol + S-adenosyl-L-methionine + 2 H2O = methylarsonous acid + [thioredoxin]-disulfide + 3 glutathione + S-adenosyl-L-homocysteine + H(+). The enzyme catalyses arsenic triglutathione + 2 [thioredoxin]-dithiol + 2 S-adenosyl-L-methionine + H2O = dimethylarsinous acid + 2 [thioredoxin]-disulfide + 3 glutathione + 2 S-adenosyl-L-homocysteine + 2 H(+). The catalysed reaction is arsenic triglutathione + 3 [thioredoxin]-dithiol + 3 S-adenosyl-L-methionine = trimethylarsine + 3 [thioredoxin]-disulfide + 3 glutathione + 3 S-adenosyl-L-homocysteine + 3 H(+). Its function is as follows. Catalyzes the transfer of a methyl group from AdoMet to arsenite, producing methylated arsenicals. Involved in the conversion of As(III) to dimethylarsenate as the main product in the medium and also produces dimethylarsine and trimethylarsine gases. Reduces the arsenic toxicity in the cell and may contribute to the global arsenic cycling. This chain is Arsenite methyltransferase, found in Aquipseudomonas alcaligenes (strain ATCC 14909 / DSM 50342 / CCUG 1425 / JCM 20561 / NBRC 14159 / NCIMB 9945 / NCTC 10367 / 1577) (Pseudomonas alcaligenes).